A 194-amino-acid chain; its full sequence is 3-isopropylmalate dehydratase small subunit (194 aa).

This sequence belongs to the LeuD family. LeuD type 1 subfamily. As to quaternary structure, heterodimer of LeuC and LeuD.

It catalyses the reaction (2R,3S)-3-isopropylmalate = (2S)-2-isopropylmalate. Its pathway is amino-acid biosynthesis; L-leucine biosynthesis; L-leucine from 3-methyl-2-oxobutanoate: step 2/4. Functionally, catalyzes the isomerization between 2-isopropylmalate and 3-isopropylmalate, via the formation of 2-isopropylmaleate. In Leuconostoc mesenteroides subsp. mesenteroides (strain ATCC 8293 / DSM 20343 / BCRC 11652 / CCM 1803 / JCM 6124 / NCDO 523 / NBRC 100496 / NCIMB 8023 / NCTC 12954 / NRRL B-1118 / 37Y), this protein is 3-isopropylmalate dehydratase small subunit.